We begin with the raw amino-acid sequence, 566 residues long: Urease subunit alpha 2 (566 aa).

The 439-residue stretch at 128-566 folds into the Urease domain; the sequence is GGVDTHIHFI…LPMAQRYFLF (439 aa). 3 residues coordinate Ni(2+): H133, H135, and K216. An N6-carboxylysine modification is found at K216. H218 contributes to the substrate binding site. The Ni(2+) site is built by H245 and H271. The Proton donor role is filled by H319. Residue D359 participates in Ni(2+) binding.

It belongs to the metallo-dependent hydrolases superfamily. Urease alpha subunit family. As to quaternary structure, may form a heterohexamer of 3 UreC (alpha) and 3 UreAB (gamma/beta) subunits. May also form a heterotrimer of UreA (gamma), UreB (beta) and UreC (alpha) subunits. Three heterotrimers associate to form the active enzyme. Requires Ni cation as cofactor. In terms of processing, carboxylation allows a single lysine to coordinate two nickel ions.

The protein resides in the cytoplasm. It carries out the reaction urea + 2 H2O + H(+) = hydrogencarbonate + 2 NH4(+). The protein operates within nitrogen metabolism; urea degradation; CO(2) and NH(3) from urea (urease route): step 1/1. The chain is Urease subunit alpha 2 from Pseudomonas syringae pv. syringae (strain B728a).